A 185-amino-acid polypeptide reads, in one-letter code: Elongation factor P (185 aa).

The protein belongs to the elongation factor P family.

The protein resides in the cytoplasm. The protein operates within protein biosynthesis; polypeptide chain elongation. Its function is as follows. Involved in peptide bond synthesis. Stimulates efficient translation and peptide-bond synthesis on native or reconstituted 70S ribosomes in vitro. Probably functions indirectly by altering the affinity of the ribosome for aminoacyl-tRNA, thus increasing their reactivity as acceptors for peptidyl transferase. The polypeptide is Elongation factor P (Gloeothece citriformis (strain PCC 7424) (Cyanothece sp. (strain PCC 7424))).